The following is a 159-amino-acid chain: UPF0699 transmembrane protein YdbS (159 aa).

A run of 2 helical transmembrane segments spans residues 22 to 42 (IIIS…SYYF) and 47 to 67 (WISG…VFII).

Belongs to the UPF0699 family.

It is found in the cell membrane. The sequence is that of UPF0699 transmembrane protein YdbS (ydbS) from Bacillus subtilis (strain 168).